Consider the following 168-residue polypeptide: HTH-type transcriptional regulator IscR (168 aa).

In terms of domain architecture, HTH rrf2-type spans 2 to 131 (KLTSKGRYAV…NNITLGELMT (130 aa)). Residues 28–51 (LADISERQGISLSYLEQLFSKLRK) constitute a DNA-binding region (H-T-H motif). 3 residues coordinate [2Fe-2S] cluster: cysteine 92, cysteine 98, and cysteine 104.

It depends on [2Fe-2S] cluster as a cofactor.

Functionally, regulates the transcription of several operons and genes involved in the biogenesis of Fe-S clusters and Fe-S-containing proteins. In Vibrio parahaemolyticus serotype O3:K6 (strain RIMD 2210633), this protein is HTH-type transcriptional regulator IscR.